A 65-amino-acid chain; its full sequence is Antimicrobial peptide THP1 (65 aa).

Residues Met1–Leu25 form the signal peptide. Intrachain disulfides connect Cys31/Cys53, Cys38/Cys59, and Cys43/Cys60. Positions Lys61–Gly65 are excised as a propeptide.

This sequence belongs to the beta-defensin family.

The protein localises to the secreted. Its function is as follows. Bactericidal activity; inhibits S.aureus and E.coli. In Meleagris gallopavo (Wild turkey), this protein is Antimicrobial peptide THP1.